We begin with the raw amino-acid sequence, 397 residues long: MIIKPKVRGFICTTTHPVGCEANVRRQIAYTQAKGPIENGPKKVLVIGASTGYGLASRIAAAFGAGAATIGVFFEKPGTETKTGTAGWYNAAAFDKAAKEAGLYAKSVNGDAFSNECRQQVIELIKQDLGQVDLVVYSLASPVRKLPDTGEVVRSALKPIGEVYTTTAIDTNKDQIISASVEPATEEEIQNTITVMGGQDWELWMSALRDAGVLADGAKSVAYSYIGTDLTWPIYWHGTLGRAKEDLDRAAAGIRGDLAAHGGTAHVAVLKSVVTQASSAIPVMPLYISMSFKIMKEKGIHEGCMEQVDRMMRTRLYGSDMALDDHARIRMDDWELRDDVQQTCRDLWPSITSENLSQLTDYSGYKQEFLRLFGFGLDGVDYDADVNPDVQFDVVTL.

Residues 48–53 (GASTGY), 74–75 (FE), 111–112 (DA), and 139–140 (LA) each bind NAD(+). Tyr225 contributes to the substrate binding site. Tyr235 (proton donor) is an active-site residue. NAD(+) contacts are provided by residues Lys244 and 273–275 (VVT).

The protein belongs to the TER reductase family. As to quaternary structure, monomer.

The catalysed reaction is a 2,3-saturated acyl-[ACP] + NAD(+) = a (2E)-enoyl-[ACP] + NADH + H(+). The protein operates within lipid metabolism; fatty acid biosynthesis. In terms of biological role, involved in the final reduction of the elongation cycle of fatty acid synthesis (FAS II). Catalyzes the reduction of a carbon-carbon double bond in an enoyl moiety that is covalently linked to an acyl carrier protein (ACP). In Edwardsiella ictaluri (strain 93-146), this protein is Enoyl-[acyl-carrier-protein] reductase [NADH].